The sequence spans 293 residues: Ribosomal protein L11 methyltransferase (293 aa).

Residues threonine 145, glycine 166, aspartate 188, and asparagine 230 each contribute to the S-adenosyl-L-methionine site.

Belongs to the methyltransferase superfamily. PrmA family.

The protein localises to the cytoplasm. It carries out the reaction L-lysyl-[protein] + 3 S-adenosyl-L-methionine = N(6),N(6),N(6)-trimethyl-L-lysyl-[protein] + 3 S-adenosyl-L-homocysteine + 3 H(+). Methylates ribosomal protein L11. The polypeptide is Ribosomal protein L11 methyltransferase (Escherichia coli (strain 55989 / EAEC)).